The sequence spans 302 residues: Urease accessory protein UreD 2 (302 aa).

This sequence belongs to the UreD family. UreD, UreF and UreG form a complex that acts as a GTP-hydrolysis-dependent molecular chaperone, activating the urease apoprotein by helping to assemble the nickel containing metallocenter of UreC. The UreE protein probably delivers the nickel.

The protein resides in the cytoplasm. Its function is as follows. Required for maturation of urease via the functional incorporation of the urease nickel metallocenter. The protein is Urease accessory protein UreD 2 of Brucella canis (strain ATCC 23365 / NCTC 10854 / RM-666).